A 783-amino-acid polypeptide reads, in one-letter code: Endonuclease MutS2 (783 aa).

An ATP-binding site is contributed by 328–335; that stretch reads GPNTGGKT. A Smr domain is found at 708 to 783; the sequence is LDLRGKRYEE…GSGCTIATLG (76 aa).

This sequence belongs to the DNA mismatch repair MutS family. MutS2 subfamily. Homodimer. Binds to stalled ribosomes, contacting rRNA.

In terms of biological role, endonuclease that is involved in the suppression of homologous recombination and thus may have a key role in the control of bacterial genetic diversity. Functionally, acts as a ribosome collision sensor, splitting the ribosome into its 2 subunits. Detects stalled/collided 70S ribosomes which it binds and splits by an ATP-hydrolysis driven conformational change. Acts upstream of the ribosome quality control system (RQC), a ribosome-associated complex that mediates the extraction of incompletely synthesized nascent chains from stalled ribosomes and their subsequent degradation. Probably generates substrates for RQC. In Streptococcus thermophilus (strain ATCC BAA-491 / LMD-9), this protein is Endonuclease MutS2.